Consider the following 109-residue polypeptide: U3-lycotoxin-Ls1x (109 aa).

The signal sequence occupies residues 1–20; that stretch reads MKFVLLFGVLLVTLFSYSSA. The propeptide occupies 21–44; the sequence is EMLDDFDQADEDELLSLIEKEEAR. Disulfide bonds link Cys-48–Cys-63, Cys-55–Cys-72, Cys-62–Cys-88, and Cys-74–Cys-86.

This sequence belongs to the neurotoxin 19 (CSTX) family. 01 subfamily. In terms of tissue distribution, expressed by the venom gland.

The protein resides in the secreted. This is U3-lycotoxin-Ls1x from Lycosa singoriensis (Wolf spider).